A 463-amino-acid chain; its full sequence is NF-kappa-B-activating protein (463 aa).

A compositionally biased stretch (basic residues) spans 1–14; the sequence is MRSRSRSRSRQRER. Residues 1–358 are disordered; sequence MRSRSRSRSR…GGSLNQKDFG (358 aa). Basic and acidic residues-rich tracts occupy residues 15–29 and 39–71; these read RRSD…ERRT and VSRE…DAVP. Over residues 78–98 the composition is skewed to low complexity; sequence SSPSRSSSSSSSDRSSSSRSP. A compositionally biased stretch (basic and acidic residues) spans 107-125; that stretch reads KSVERWPNDRYHENNDRRQ. Phosphoserine occurs at positions 136, 189, and 191. Threonine 195 carries the post-translational modification Phosphothreonine. Over residues 208–238 the composition is skewed to basic residues; the sequence is PKKKKKKGKRKHKKSEKKSKKKSKKSKKKKS. Over residues 241–267 the composition is skewed to low complexity; sequence ESSSSSSSSSSEDSSDESSSSSSSSSS. The segment covering 268 to 278 has biased composition (acidic residues); that stretch reads DSEDESEEEDV. A compositionally biased stretch (basic and acidic residues) spans 279 to 288; the sequence is WLEKTADGIK. Residues 289–312 show a composition bias toward basic residues; that stretch reads KPKKKKSSTSKKDKKSKKKKKKRK. Residues 330–340 are compositionally biased toward basic and acidic residues; it reads KNKESASHNDE.

The protein belongs to the NKAP family.

The protein resides in the nucleus. Tumor suppressor involved in maintaining genome integrity. Influences gene expression and mRNA splicing. This chain is NF-kappa-B-activating protein, found in Drosophila melanogaster (Fruit fly).